We begin with the raw amino-acid sequence, 364 residues long: Histidinol-phosphate aminotransferase (364 aa).

K226 carries the post-translational modification N6-(pyridoxal phosphate)lysine.

This sequence belongs to the class-II pyridoxal-phosphate-dependent aminotransferase family. Histidinol-phosphate aminotransferase subfamily. As to quaternary structure, homodimer. It depends on pyridoxal 5'-phosphate as a cofactor.

It carries out the reaction L-histidinol phosphate + 2-oxoglutarate = 3-(imidazol-4-yl)-2-oxopropyl phosphate + L-glutamate. It functions in the pathway amino-acid biosynthesis; L-histidine biosynthesis; L-histidine from 5-phospho-alpha-D-ribose 1-diphosphate: step 7/9. The polypeptide is Histidinol-phosphate aminotransferase (Campylobacter jejuni subsp. jejuni serotype O:6 (strain 81116 / NCTC 11828)).